A 137-amino-acid chain; its full sequence is TM2 domain-containing protein DDB_G0287015 (137 aa).

The TM2 domain maps to 9 to 57 (QASLVVAYLLLIFLGFFGVHRFYVGRTISGVVYLLTGGIFGIGYIVDFF). 2 helical membrane passes run 12 to 32 (LVVA…RFYV) and 39 to 59 (VVYL…FFLL). The disordered stretch occupies residues 106–137 (IQPQQQQYYQQPYQQQQYQPQPYQPNSPQYQP).

It belongs to the TM2 family.

The protein resides in the membrane. The polypeptide is TM2 domain-containing protein DDB_G0287015 (Dictyostelium discoideum (Social amoeba)).